A 150-amino-acid polypeptide reads, in one-letter code: Ribosome maturation factor RimP (150 aa).

The protein belongs to the RimP family.

It localises to the cytoplasm. Its function is as follows. Required for maturation of 30S ribosomal subunits. In Yersinia pestis bv. Antiqua (strain Antiqua), this protein is Ribosome maturation factor RimP.